A 514-amino-acid chain; its full sequence is Activin receptor type-2A (514 aa).

A signal peptide spans 1–20; the sequence is MGAATKLAFAVFLISCSSAG. The Extracellular segment spans residues 21-136; that stretch reads SILGRSETKE…TSNPVTTKPP (116 aa). 5 disulfides stabilise this stretch: cysteine 31–cysteine 61, cysteine 51–cysteine 79, cysteine 86–cysteine 105, cysteine 92–cysteine 104, and cysteine 106–cysteine 111. N-linked (GlcNAc...) asparagine glycans are attached at residues asparagine 46, asparagine 67, and asparagine 88. The chain crosses the membrane as a helical span at residues 137–162; that stretch reads LFNTLLYSLVPIMVVAVIVLFSFWMY. The Cytoplasmic segment spans residues 163 to 514; it reads RHHKLAYPPV…VDFPPKESSL (352 aa). The region spanning 193-486 is the Protein kinase domain; the sequence is LQLLEVKARG…EERIIQMQKL (294 aa). ATP is bound by residues 199 to 207 and lysine 220; that span reads KARGRFGCV. The Proton acceptor role is filled by aspartate 323.

It belongs to the protein kinase superfamily. TKL Ser/Thr protein kinase family. TGFB receptor subfamily.

The protein localises to the cell membrane. The catalysed reaction is L-threonyl-[receptor-protein] + ATP = O-phospho-L-threonyl-[receptor-protein] + ADP + H(+). It catalyses the reaction L-seryl-[receptor-protein] + ATP = O-phospho-L-seryl-[receptor-protein] + ADP + H(+). In terms of biological role, receptor for activin A, activin B and inhibin A. Involved in transmembrane signaling. This is Activin receptor type-2A (acvr2a) from Xenopus laevis (African clawed frog).